Reading from the N-terminus, the 100-residue chain is Urease subunit gamma (100 aa).

This sequence belongs to the urease gamma subunit family. In terms of assembly, heterotrimer of UreA (gamma), UreB (beta) and UreC (alpha) subunits. Three heterotrimers associate to form the active enzyme.

It localises to the cytoplasm. It carries out the reaction urea + 2 H2O + H(+) = hydrogencarbonate + 2 NH4(+). Its pathway is nitrogen metabolism; urea degradation; CO(2) and NH(3) from urea (urease route): step 1/1. This chain is Urease subunit gamma, found in Rhodopseudomonas palustris (strain ATCC BAA-98 / CGA009).